Here is a 421-residue protein sequence, read N- to C-terminus: uncharacterized protein (421 aa).

Lys249 carries the post-translational modification N6-(pyridoxal phosphate)lysine.

The protein belongs to the class-I pyridoxal-phosphate-dependent aminotransferase family. Pyridoxal 5'-phosphate is required as a cofactor.

Its subcellular location is the cytoplasm. This is an uncharacterized protein from Schizosaccharomyces pombe (strain 972 / ATCC 24843) (Fission yeast).